We begin with the raw amino-acid sequence, 270 residues long: L-fucose dehydrogenase (270 aa).

Arg19, Ile21, Asp40, Lys41, Asp62, Val63, Asn89, Tyr154, Lys158, Ile187, Thr189, and Leu191 together coordinate NAD(+). Residue Tyr154 is the Proton acceptor of the active site.

This sequence belongs to the short-chain dehydrogenases/reductases (SDR) family. As to quaternary structure, homotetramer. Highly expressed in brain, placenta, liver and kidney.

It localises to the cytoplasm. The enzyme catalyses L-fucose + NAD(+) = L-fucono-1,5-lactone + NADH + H(+). It carries out the reaction D-arabinose + NAD(+) = D-arabinono-1,5-lactone + NADH + H(+). The catalysed reaction is L-galactose + NAD(+) = L-galactono-1,5-lactone + NADH + H(+). The protein operates within carbohydrate degradation; L-fucose degradation. In terms of biological role, catalyzes the NAD(+)-dependent oxidation of L-fucose, yielding L-fucono-1,5-lactone, which rapidly converts spontaneously to L-fucone-1,4-lactone. Can also act on D-arabinose and L-galactose, with lower catalytic efficiency. Does not use NADPH. May be the initial enzyme of the L-fucose degradation pathway in mammals. This is L-fucose dehydrogenase from Homo sapiens (Human).